We begin with the raw amino-acid sequence, 1030 residues long: F-box/WD repeat-containing protein 10 (1030 aa).

An F-box domain is found at 280-329 (RDFIRDLPLHLSKYILRMLDKHSLNRCIFVSQHWATLAQQVKVDQSMHSF). WD repeat units follow at residues 466–505 (GHAG…CVRI), 508–547 (GHQG…KTFK), 549–584 (KDPI…LQKT), 587–624 (GHEG…ERCL), and 626–667 (AFKH…KVIK). The tract at residues 709-773 (KNKVKKSKDK…LSSDDMETPV (65 aa)) is disordered. Basic and acidic residues predominate over residues 716–733 (KDKEEEREETSLGDEHSR). Residues 734–749 (STIQGHSLKDSVSSKQ) are compositionally biased toward polar residues. Residues 963 to 992 (FMLMTVKEEKEFAEAKMKEYEASVSTKEVD) are a coiled coil.

Probable substrate-recognition component of a SCF (SKP1-CUL1-F-box protein)-type E3 ubiquitin ligase complex which mediates the ubiquitination and subsequent proteasomal degradation of target proteins. Overexpression is leading to degradation of CBX5 and CBX1. This Mus musculus (Mouse) protein is F-box/WD repeat-containing protein 10 (Fbxw10).